Consider the following 294-residue polypeptide: 4-hydroxy-tetrahydrodipicolinate synthase (294 aa).

Position 47 (Thr47) interacts with pyruvate. Catalysis depends on Tyr136, which acts as the Proton donor/acceptor. Lys164 serves as the catalytic Schiff-base intermediate with substrate. Val206 contributes to the pyruvate binding site.

The protein belongs to the DapA family. As to quaternary structure, homotetramer; dimer of dimers.

It localises to the cytoplasm. It catalyses the reaction L-aspartate 4-semialdehyde + pyruvate = (2S,4S)-4-hydroxy-2,3,4,5-tetrahydrodipicolinate + H2O + H(+). It participates in amino-acid biosynthesis; L-lysine biosynthesis via DAP pathway; (S)-tetrahydrodipicolinate from L-aspartate: step 3/4. Functionally, catalyzes the condensation of (S)-aspartate-beta-semialdehyde [(S)-ASA] and pyruvate to 4-hydroxy-tetrahydrodipicolinate (HTPA). In Cyanothece sp. (strain PCC 7425 / ATCC 29141), this protein is 4-hydroxy-tetrahydrodipicolinate synthase.